Consider the following 105-residue polypeptide: MSAKIKSGDDVIVLTGKDKGKIGKVIKVIARDAKKKVIVSGVNVHKRHTKPKAGSSGGILNKELAIDISNVATLDPKYKTPTRVGFKVIDGRKVRFAKVSGEVID.

The protein belongs to the universal ribosomal protein uL24 family. Part of the 50S ribosomal subunit.

In terms of biological role, one of two assembly initiator proteins, it binds directly to the 5'-end of the 23S rRNA, where it nucleates assembly of the 50S subunit. Functionally, one of the proteins that surrounds the polypeptide exit tunnel on the outside of the subunit. The protein is Large ribosomal subunit protein uL24 of Wolbachia pipientis wMel.